We begin with the raw amino-acid sequence, 312 residues long: Ribonuclease Z (312 aa).

The Zn(2+) site is built by His62, His64, Asp66, His67, His144, Asp215, and His273. The Proton acceptor role is filled by Asp66.

This sequence belongs to the RNase Z family. As to quaternary structure, homodimer. Zn(2+) is required as a cofactor.

The catalysed reaction is Endonucleolytic cleavage of RNA, removing extra 3' nucleotides from tRNA precursor, generating 3' termini of tRNAs. A 3'-hydroxy group is left at the tRNA terminus and a 5'-phosphoryl group is left at the trailer molecule.. In terms of biological role, zinc phosphodiesterase, which displays some tRNA 3'-processing endonuclease activity. Probably involved in tRNA maturation, by removing a 3'-trailer from precursor tRNA. In Prochlorococcus marinus (strain MIT 9515), this protein is Ribonuclease Z.